Consider the following 1023-residue polypeptide: Presequence protease, mitochondrial (1023 aa).

A mitochondrion-targeting transit peptide spans 1–62; sequence MFRQSKTIIT…PDLFLTAVKL (62 aa). His99 contacts Zn(2+). Glu102 acts as the Proton acceptor in catalysis. Zn(2+)-binding residues include His103 and Glu200. A disulfide bridge links Cys114 with Cys551.

The protein belongs to the peptidase M16 family. PreP subfamily. As to quaternary structure, monomer and homodimer; homodimerization is induced by binding of the substrate. Zn(2+) is required as a cofactor. A disulfide bond locks the enzyme in the closed conformation preventing substrate entry into the catalytic chamber.

Its subcellular location is the mitochondrion matrix. Its activity is regulated as follows. Mainly exists in a closed and catalytically competent conformation but a closed-to-open switch allows substrate entry into the catalytic chamber. Substrate binding induces closure and dimerization. A disulfide bond may lock the enzyme in a closed conformation preventing substrate entry into the catalytic chamber, participating in redox regulation of the enzyme. Inhibited by metal-chelating agents. Inhibited by nickel and zinc excess, and slightly activated by manganese. Metalloendopeptidase of the mitochondrial matrix that functions in peptide cleavage and degradation rather than in protein processing. Has an ATP-independent activity. Specifically cleaves peptides in the range of 5 to 65 residues. Shows a preference for cleavage after small polar residues and before basic residues, but without any positional preference. Degrades the transit peptides of mitochondrial proteins after their cleavage. Also degrades other unstructured peptides. This chain is Presequence protease, mitochondrial (pitrm1), found in Danio rerio (Zebrafish).